A 359-amino-acid polypeptide reads, in one-letter code: Pyruvate dehydrogenase E1 component subunit beta, mitochondrial (359 aa).

The transit peptide at 1 to 30 directs the protein to the mitochondrion; it reads MAAVSGLVRRPLREVSRLLKRRFHWTAPAA. A Phosphotyrosine modification is found at Y67. Thiamine diphosphate is bound at residue E89. K(+) is bound by residues I142, A190, I191, D193, and N195. K354 carries the N6-acetyllysine modification.

In terms of assembly, heterotetramer of two PDHA1 and two PDHB subunits. The heterotetramer interacts with DLAT, and is part of the multimeric pyruvate dehydrogenase complex that contains multiple copies of pyruvate dehydrogenase (E1), dihydrolipoamide acetyltransferase (DLAT, E2) and lipoamide dehydrogenase (DLD, E3). These subunits are bound to an inner core composed of about 48 DLAT and 12 PDHX molecules. Interacts with DLAT. Thiamine diphosphate serves as cofactor.

The protein localises to the mitochondrion matrix. It carries out the reaction N(6)-[(R)-lipoyl]-L-lysyl-[protein] + pyruvate + H(+) = N(6)-[(R)-S(8)-acetyldihydrolipoyl]-L-lysyl-[protein] + CO2. Its function is as follows. The pyruvate dehydrogenase complex catalyzes the overall conversion of pyruvate to acetyl-CoA and CO(2), and thereby links the glycolytic pathway to the tricarboxylic cycle. The protein is Pyruvate dehydrogenase E1 component subunit beta, mitochondrial (PDHB) of Pongo abelii (Sumatran orangutan).